The chain runs to 379 residues: Putative acetyl-CoA C-acetyltransferase VraB (379 aa).

The active-site Acyl-thioester intermediate is C86. H338 acts as the Proton acceptor in catalysis.

It belongs to the thiolase-like superfamily. Thiolase family.

In Staphylococcus aureus (strain Mu3 / ATCC 700698), this protein is Putative acetyl-CoA C-acetyltransferase VraB (vraB).